The primary structure comprises 489 residues: Lysine--tRNA ligase (489 aa).

Mg(2+)-binding residues include glutamate 399 and glutamate 406.

This sequence belongs to the class-II aminoacyl-tRNA synthetase family. Homodimer. The cofactor is Mg(2+).

It localises to the cytoplasm. It carries out the reaction tRNA(Lys) + L-lysine + ATP = L-lysyl-tRNA(Lys) + AMP + diphosphate. This is Lysine--tRNA ligase from Synechococcus sp. (strain CC9311).